We begin with the raw amino-acid sequence, 205 residues long: Large ribosomal subunit protein uL4 (205 aa).

A disordered region spans residues valine 56–arginine 78.

This sequence belongs to the universal ribosomal protein uL4 family. Part of the 50S ribosomal subunit.

In terms of biological role, one of the primary rRNA binding proteins, this protein initially binds near the 5'-end of the 23S rRNA. It is important during the early stages of 50S assembly. It makes multiple contacts with different domains of the 23S rRNA in the assembled 50S subunit and ribosome. Its function is as follows. Forms part of the polypeptide exit tunnel. This Ehrlichia ruminantium (strain Gardel) protein is Large ribosomal subunit protein uL4.